The sequence spans 186 residues: Dehydrin Rab18 (186 aa).

A disordered region spans residues 1-186; sequence MASYQNRPGG…IKEKLPGGGR (186 aa). The span at 30–85 shows a compositional bias: gly residues; it reads PMGGGGYGTGGGGGATGGQGYGTGGQGYGSGGQGYGTGGQGYGTGTGTEGFGTGGG. Residues 89-98 show a composition bias toward basic and acidic residues; that stretch reads HGQEQLHKES. The segment covering 105-116 has biased composition (low complexity); that stretch reads MLHRSGSGSSSS. Over residues 133 to 144 the composition is skewed to basic and acidic residues; sequence KIKEKLPGHHDQ. Residues 152-164 are compositionally biased toward gly residues; that stretch reads GGMGSGYDAGGYG. Positions 165–186 are enriched in basic and acidic residues; it reads GEHHEKKGMMDKIKEKLPGGGR.

The protein belongs to the plant dehydrin family.

This is Dehydrin Rab18 (RAB18) from Arabidopsis thaliana (Mouse-ear cress).